Consider the following 68-residue polypeptide: Large ribosomal subunit protein uL29 (68 aa).

Belongs to the universal ribosomal protein uL29 family.

The chain is Large ribosomal subunit protein uL29 from Acidiphilium cryptum (strain JF-5).